The chain runs to 726 residues: Netrin-A (726 aa).

Residues 1–29 (MIRGILLLLLGTTRFSPIQCISNDVYFKM) form the signal peptide. One can recognise a Laminin N-terminal domain in the interval 46 to 312 (EPRACIPDFV…AISDFSVGGR (267 aa)). N-linked (GlcNAc...) asparagine glycans are attached at residues N108, N112, and N127. 12 disulfides stabilise this stretch: C313-C322, C315-C332, C334-C343, C346-C366, C369-C378, C371-C396, C399-C408, C411-C429, C432-C444, C434-C451, C453-C462, and C465-C479. Laminin EGF-like domains are found at residues 313 to 368 (CKCN…ECKE), 369 to 431 (CNCN…VCKA), and 432 to 481 (CDCH…PCIK). An N-linked (GlcNAc...) asparagine glycan is attached at N445. A disordered region spans residues 490 to 516 (LDTQNTAPEPDEPESSPGSGGDRNGAA). 2 disulfides stabilise this stretch: C533/C671 and C549/C725. An NTR domain is found at 533-725 (CGKCRVSTKR…KRFQRRARTC (193 aa)). N-linked (GlcNAc...) asparagine glycosylation is found at N652 and N679.

At the midline of developing CNS at the time of commissure formation and in different subsets of neurons, muscles, and epidermal patches.

It localises to the secreted. The protein localises to the extracellular space. Its subcellular location is the extracellular matrix. Functionally, netrins control guidance of CNS commissural axons at the midline and peripheral motor axons to their target muscles. The protein is Netrin-A (NetA) of Drosophila melanogaster (Fruit fly).